We begin with the raw amino-acid sequence, 798 residues long: MEIRGALDLRKRQVLIFLVLLGLSRAGTESAHYSVAEETEIGSFVANLARDLGLGVEELSSREARVVSDDNKKYLHLDLLTGNLLLNEKLDRDELCGSTEPCVLHFQVVLENPLQFFRVELRVKDINDHSPTFLDKEILIKISEGTTVGATFLMESAQDLDVGSNSLQNYTISPNSHFYIKIPDSSDRKIYPELVLDRALDYEQEAELRLTLTAVDGGSPPKSGTTLVLIKVLDINDNAPEFPQSLYEVQVPEDRPLGSWIATISAKDLDAGNYGKISYTFFHASEDIRKTFEINPISGEVNLRSPLDFEVIQSYTINIQATDGGGLSGKCTLLVKVMDINDNPPEVTISSITKRIPENASETLVALFSILDQDSGDNGRMICSIQDNLPFFLKPTFKNFFTLVSEKALDRESQAEYNITITVTDLGTPRLKTEYNITVLVSDVNDNAPAFTQTSYTLFLRENNSPALHIGSVSATDRDSGTNAQVTYSLLPPQDPQLPLASLVSINADNGHLFALRSLDYEALQEFEFRVGATDRGSPALSSEALVRVLVLDANDNSPFVLYPLQNGSAPCTELVPRAAEPGYLVTKVVAVDGDSGQNAWLSYQLLKATEPGLFGVWAHNGEVRTARLLSERDAAKHRLVVLVKDNGEPPRSATATLHVLLVDGFSQPYLPLPEAAPAQAQADSLTVYLVVALASVSSLFLFSVLLFVAVRLCRRSRAASVGRCSVPEGPFPGHLVDVSGTGTLSQSYQYEVCLTGGSGTNEFKFLKPIIPNFQVHDTGKNMGEIENFRNSFGLNIQ.

A signal peptide spans 1–26 (MEIRGALDLRKRQVLIFLVLLGLSRA). At 27–686 (GTESAHYSVA…APAQAQADSL (660 aa)) the chain is on the extracellular side. Cadherin domains are found at residues 35 to 133 (VAEE…SPTF), 138 to 242 (ILIK…APEF), 247 to 347 (YEVQ…PPEV), 352 to 451 (ITKR…APAF), and 456 to 561 (YTLF…SPFV). Cys-96 and Cys-102 are joined by a disulfide. N-linked (GlcNAc...) asparagine glycosylation is present at Asn-169. Residues Asn-359, Asn-418, and Asn-436 are each glycosylated (N-linked (GlcNAc...) asparagine). The N-linked (GlcNAc...) asparagine glycan is linked to Asn-567. Residues 568-671 (GSAPCTELVP…LVDGFSQPYL (104 aa)) form the Cadherin 6 domain. Residues 687–711 (TVYLVVALASVSSLFLFSVLLFVAV) form a helical membrane-spanning segment. The Cytoplasmic portion of the chain corresponds to 712–798 (RLCRRSRAAS…FRNSFGLNIQ (87 aa)).

Its subcellular location is the cell membrane. Functionally, potential calcium-dependent cell-adhesion protein. May be involved in the establishment and maintenance of specific neuronal connections in the brain. This chain is Protocadherin beta-14 (PCDHB14), found in Pan troglodytes (Chimpanzee).